The following is a 245-amino-acid chain: Phosphoribosylaminoimidazole-succinocarboxamide synthase (245 aa).

The protein belongs to the SAICAR synthetase family.

The catalysed reaction is 5-amino-1-(5-phospho-D-ribosyl)imidazole-4-carboxylate + L-aspartate + ATP = (2S)-2-[5-amino-1-(5-phospho-beta-D-ribosyl)imidazole-4-carboxamido]succinate + ADP + phosphate + 2 H(+). It participates in purine metabolism; IMP biosynthesis via de novo pathway; 5-amino-1-(5-phospho-D-ribosyl)imidazole-4-carboxamide from 5-amino-1-(5-phospho-D-ribosyl)imidazole-4-carboxylate: step 1/2. The polypeptide is Phosphoribosylaminoimidazole-succinocarboxamide synthase (Trichormus variabilis (strain ATCC 29413 / PCC 7937) (Anabaena variabilis)).